Reading from the N-terminus, the 397-residue chain is Elongation factor Tu (397 aa).

The tr-type G domain occupies 10–207 (LPHVNVGTIG…TLDSYIPEPV (198 aa)). Positions 19–26 (GHVDHGKT) are G1. Position 19 to 26 (19 to 26 (GHVDHGKT)) interacts with GTP. Threonine 26 is a Mg(2+) binding site. Residues 60–64 (GITIN) form a G2 region. Positions 81–84 (DCPG) are G3. GTP-binding positions include 81–85 (DCPGH) and 136–139 (NKAD). A G4 region spans residues 136–139 (NKAD). Residues 174–176 (SAR) are G5.

Belongs to the TRAFAC class translation factor GTPase superfamily. Classic translation factor GTPase family. EF-Tu/EF-1A subfamily. Monomer.

It localises to the cytoplasm. It carries out the reaction GTP + H2O = GDP + phosphate + H(+). In terms of biological role, GTP hydrolase that promotes the GTP-dependent binding of aminoacyl-tRNA to the A-site of ribosomes during protein biosynthesis. The protein is Elongation factor Tu of Pseudomonas syringae pv. syringae (strain B728a).